The following is a 95-amino-acid chain: Protein RnfH (95 aa).

The protein belongs to the UPF0125 (RnfH) family.

This chain is Protein RnfH, found in Erwinia tasmaniensis (strain DSM 17950 / CFBP 7177 / CIP 109463 / NCPPB 4357 / Et1/99).